Here is a 189-residue protein sequence, read N- to C-terminus: MCDKIFHNLSGKTLVATPYVITKGIYHKSLIYMLSHTEEGAIGLIFNRLVNHVDLKSFFKIKEDKITSQVMVPIYLGGPIEHEKGFFLHSRDYNKNLLLDFHNDLAVSSNLEISEDIAFGKGPKNSLFIVGYTAWKPGQLEEELEKNLWLVMDCSKEFIFAENPENKWHNALKHLGIDEIYFSSQIGNA.

This sequence belongs to the UPF0301 (AlgH) family.

The protein is UPF0301 protein RP032 of Rickettsia prowazekii (strain Madrid E).